A 521-amino-acid polypeptide reads, in one-letter code: Ribonuclease Y (521 aa).

The chain crosses the membrane as a helical span at residues 5–25 (TVWILISILLATVGAVVGFFV). The disordered stretch occupies residues 87–117 (KQENRLMQKEENLDRKDETLDNRERQLEKKE). One can recognise a KH domain in the interval 211–274 (TVSVVNLPND…ETARIALDKL (64 aa)). Residues 337 to 430 (VLKHSMEVAY…VAAADALSAA (94 aa)) form the HD domain.

The protein belongs to the RNase Y family.

The protein localises to the cell membrane. Functionally, endoribonuclease that initiates mRNA decay. The chain is Ribonuclease Y from Bacillus mycoides (strain KBAB4) (Bacillus weihenstephanensis).